We begin with the raw amino-acid sequence, 295 residues long: Outer surface protein B (295 aa).

The first 16 residues, 1–16 (MKQYLLGFTLVFALIA), serve as a signal peptide directing secretion. Cysteine 17 carries N-palmitoyl cysteine lipidation. Cysteine 17 carries S-diacylglycerol cysteine lipidation.

The protein localises to the cell outer membrane. The sequence is that of Outer surface protein B (ospB) from Borreliella burgdorferi (Lyme disease spirochete).